A 668-amino-acid chain; its full sequence is Auxilin-like clathrin uncoating factor SWA2 (668 aa).

Residues 1 to 95 (MSDPFAHLLT…ANNTPPSALA (95 aa)) are disordered. The interval 1–100 (MSDPFAHLLT…PSALANTDDD (100 aa)) is CB1. Residues 17–36 (SASASKETTPQSSNSPSITG) show a composition bias toward polar residues. A phosphoserine mark is found at S52 and S64. Over residues 76–92 (PTNSTTKSNTANNTPPS) the composition is skewed to low complexity. One can recognise a UBA domain in the interval 140 to 180 (DEVKDMEIARLMSLGLSIEEATEFYENDVTYERYLEILKSK). A CB2 region spans residues 238–302 (EANDRLNNYS…FETKIDITKR (65 aa)). Phosphoserine occurs at positions 264, 308, and 312. Disordered regions lie at residues 302-323 (RTAP…EENS) and 339-359 (EGNL…ENSN). The tract at residues 303–362 (TAPDVSHSSSPTSGILIEENSRRNEPLIEDSLLDFSEGNLTNSKSNEDSTLFNENSNTDS) is CB3. A compositionally biased stretch (polar residues) spans 340 to 359 (GNLTNSKSNEDSTLFNENSN). 3 TPR repeats span residues 374-407 (YNEF…LPLN), 412-445 (IIAL…FPSS), and 467-500 (PKIM…NFFD). The disordered stretch occupies residues 511–556 (QDFINPPPVKKSMPVKKKTTTTSPATKKQNLTASSSNSPISVDSTS). The span at 539–555 (QNLTASSSNSPISVDST) shows a compositional bias: polar residues. The J domain maps to 603-668 (CNWKDVSMQD…DKFKLQNDIN (66 aa)).

As to quaternary structure, interacts with the clathrin light and heavy chains CLC1 and CHC1, respectively. Binds to clathrin with its N-terminal domain containing 3 clathrin-binding (CB) motifs. Association with clathrin is transient. Binds to polyubiquitin and ubiquitinated proteins.

It is found in the cytoplasm. Its subcellular location is the endoplasmic reticulum membrane. Cofactor for the uncoating of clathrin-coated vesicles (CCVs) by Hsp70-type chaperones (SSA1/2/3 and SSB1/2). Coat disassembly is important for fusion of vesicles with target membranes and for recycling components of clathrin coats to the cytoplasm for further rounds of vesicle formation. Binds to assembled clathrin and recruits the ATP-activated chaperone to CCVs. Stimulates the ATPase activity of the clathrin-associated Hsp70-type chaperone SSA1, which then disrupts clathrin-clathrin interactions, leading to release of the clathrin coat. In addition, prevents unproductive clathrin assembly in the cell. Also required for cortical endoplasmic reticulum inheritance. The polypeptide is Auxilin-like clathrin uncoating factor SWA2 (SWA2) (Saccharomyces cerevisiae (strain ATCC 204508 / S288c) (Baker's yeast)).